A 254-amino-acid chain; its full sequence is 3-oxo-5-alpha-steroid 4-dehydrogenase 2 (254 aa).

Helical transmembrane passes span 8–28, 72–92, 146–166, and 206–226; these read VPVL…LCLG, PRSL…AHYF, FSFG…SDYT, and LATW…FLGM.

This sequence belongs to the steroid 5-alpha reductase family. As to expression, expressed in high levels in the prostate and many other androgen-sensitive tissues.

The protein resides in the microsome membrane. The protein localises to the endoplasmic reticulum membrane. The enzyme catalyses a 3-oxo-5alpha-steroid + NADP(+) = a 3-oxo-Delta(4)-steroid + NADPH + H(+). It carries out the reaction 17beta-hydroxy-5alpha-androstan-3-one + NADP(+) = testosterone + NADPH + H(+). It catalyses the reaction 5alpha-pregnane-3,20-dione + NADP(+) = progesterone + NADPH + H(+). Functionally, converts testosterone (T) into 5-alpha-dihydrotestosterone (DHT) and progesterone or corticosterone into their corresponding 5-alpha-3-oxosteroids. It plays a central role in sexual differentiation and androgen physiology. The polypeptide is 3-oxo-5-alpha-steroid 4-dehydrogenase 2 (Srd5a2) (Rattus norvegicus (Rat)).